A 36-amino-acid chain; its full sequence is Pancreatic polypeptide (36 aa).

A Tyrosine amide modification is found at Y36.

This sequence belongs to the NPY family.

The protein resides in the secreted. Hormone secreted by pancreatic cells that acts as a regulator of pancreatic and gastrointestinal functions probably by signaling through the G protein-coupled receptor NPY4R2. In Macaca mulatta (Rhesus macaque), this protein is Pancreatic polypeptide (PPY).